Consider the following 400-residue polypeptide: CinA-like protein (400 aa).

It belongs to the CinA family.

This Escherichia coli (strain 55989 / EAEC) protein is CinA-like protein.